The primary structure comprises 373 residues: Chaperone protein DnaJ (373 aa).

One can recognise a J domain in the interval 5 to 70 (DYYEVLGVHR…QQRVIYDQYG (66 aa)). The CR-type zinc finger occupies 136-214 (GLETKIQIPR…CHGSGRVRGK (79 aa)). Zn(2+) contacts are provided by C149, C152, C166, C169, C188, C191, C202, and C205. CXXCXGXG motif repeat units lie at residues 149 to 156 (CGTCDGIG), 166 to 173 (CPTCQGAG), 188 to 195 (CPECNGEG), and 202 to 209 (CEECHGSG).

Belongs to the DnaJ family. As to quaternary structure, homodimer. Zn(2+) is required as a cofactor.

Its subcellular location is the cytoplasm. In terms of biological role, participates actively in the response to hyperosmotic and heat shock by preventing the aggregation of stress-denatured proteins and by disaggregating proteins, also in an autonomous, DnaK-independent fashion. Unfolded proteins bind initially to DnaJ; upon interaction with the DnaJ-bound protein, DnaK hydrolyzes its bound ATP, resulting in the formation of a stable complex. GrpE releases ADP from DnaK; ATP binding to DnaK triggers the release of the substrate protein, thus completing the reaction cycle. Several rounds of ATP-dependent interactions between DnaJ, DnaK and GrpE are required for fully efficient folding. Also involved, together with DnaK and GrpE, in the DNA replication of plasmids through activation of initiation proteins. The protein is Chaperone protein DnaJ of Syntrophotalea carbinolica (strain DSM 2380 / NBRC 103641 / GraBd1) (Pelobacter carbinolicus).